The chain runs to 242 residues: MIKRVKTGIPGMDEILHGGIPERNIVLISGGPGTGKTIFSQQFIWNGLQMGEPGIYVALEEHPVQVKKNMEVFGWNVDPFEKEGKFAIVDAFTGGIGEYAEKEKYVVRDIDDVRELAEVLKRAVRETQAKRVVIDSVTTLYITKPAMARSIIFQLKRILSGLGCTSLFVSQVSVTEKGFGGPGVEHGVDGIIRLDLDEIDGELKRSLIVWKMRGTSHSMRRHPFEITDKGIVIYPSEGGEGR.

Residues 3–242 enclose the KaiC domain; it reads KRVKTGIPGM…IYPSEGGEGR (240 aa). An ATP-binding site is contributed by 30 to 37; that stretch reads GGPGTGKT.

The protein belongs to the UPF0273 family.

The chain is UPF0273 protein TM_0370 from Thermotoga maritima (strain ATCC 43589 / DSM 3109 / JCM 10099 / NBRC 100826 / MSB8).